A 146-amino-acid polypeptide reads, in one-letter code: Ribosome-binding factor A (146 aa).

Residues 121 to 146 (KQQQFGSADDVTENDIDEADDTEGKA) form a disordered region. A compositionally biased stretch (acidic residues) spans 130–146 (DVTENDIDEADDTEGKA).

This sequence belongs to the RbfA family. As to quaternary structure, monomer. Binds 30S ribosomal subunits, but not 50S ribosomal subunits or 70S ribosomes.

The protein resides in the cytoplasm. One of several proteins that assist in the late maturation steps of the functional core of the 30S ribosomal subunit. Associates with free 30S ribosomal subunits (but not with 30S subunits that are part of 70S ribosomes or polysomes). Required for efficient processing of 16S rRNA. May interact with the 5'-terminal helix region of 16S rRNA. In Shewanella sp. (strain MR-4), this protein is Ribosome-binding factor A.